The primary structure comprises 382 residues: Osmoprotectant import ATP-binding protein OsmV (382 aa).

Residues 2–241 (IKLENLTKQF…PANEFVGSFV (240 aa)) enclose the ABC transporter domain. 39–46 (GPSGCGKT) is an ATP binding site. CBS domains are found at residues 258 to 320 (VTDQ…THPF) and 322 to 373 (ITGK…GRTR).

This sequence belongs to the ABC transporter superfamily. The complex is composed of two ATP-binding proteins (OsmV), two transmembrane proteins (OsmW and OsmY) and a solute-binding protein (OsmX).

It is found in the cell inner membrane. Its function is as follows. Part of the OsmU ABC transporter complex, which is involved in the uptake of osmoprotectants such as choline-O-sulfate and glycine betaine. Probably responsible for energy coupling to the transport system. The chain is Osmoprotectant import ATP-binding protein OsmV (osmV) from Salmonella typhimurium (strain LT2 / SGSC1412 / ATCC 700720).